A 241-amino-acid chain; its full sequence is Small ribosomal subunit protein uS2 (241 aa).

The protein belongs to the universal ribosomal protein uS2 family.

This is Small ribosomal subunit protein uS2 from Yersinia enterocolitica serotype O:8 / biotype 1B (strain NCTC 13174 / 8081).